Reading from the N-terminus, the 419-residue chain is Protein FAM217A (419 aa).

Disordered regions lie at residues 1–23, 100–119, 234–298, and 362–388; these read MGRK…QENL, DKRN…LSES, PSSS…SRSL, and PIPL…HRKS. The span at 7–23 shows a compositional bias: polar residues; that stretch reads ESCSANPHSSSISQENL. The segment covering 284–298 has biased composition (polar residues); it reads SLSTAGKSKSNSRSL. Basic residues predominate over residues 378 to 388; the sequence is PRTKKKCHRKS.

Belongs to the FAM217 family.

In Rattus norvegicus (Rat), this protein is Protein FAM217A (Fam217a).